The primary structure comprises 773 residues: Mitochondrial inner membrane m-AAA protease component yta12 (773 aa).

The disordered stretch occupies residues 83 to 119 (FSVTSKRSQNGSSGSNSDANGRKNGQKNDDSKKKGLN). Positions 87 to 101 (SKRSQNGSSGSNSDA) are enriched in low complexity. 2 helical membrane-spanning segments follow: residues 126–146 (VFEI…AYIL) and 239–259 (VLAT…VIYL). ATP-binding residues include V298, A299, T340, G341, K342, T343, L344, and H479. H561 is a binding site for Zn(2+). E562 is a catalytic residue. The Zn(2+) site is built by H565 and D638. The segment at 752–773 (EYKNDHDPRNPPIPPSPQQPSA) is disordered. Over residues 761–773 (NPPIPPSPQQPSA) the composition is skewed to pro residues.

In the N-terminal section; belongs to the AAA ATPase family. It in the C-terminal section; belongs to the peptidase M41 family. As to quaternary structure, component of the m-AAA protease complex. The cofactor is Zn(2+).

Its subcellular location is the mitochondrion membrane. The catalysed reaction is ATP + H2O = ADP + phosphate + H(+). Its function is as follows. Catalytic component of the m-AAA protease, a protease that plays a key role in proteostasis of inner mitochondrial membrane proteins. Possesses both ATPase and protease activities: the ATPase activity is required to unfold substrates, threading them into the internal proteolytic cavity for hydrolysis into small peptide fragments. The complex is necessary for the assembly of mitochondrial respiratory chain and ATPase complexes. The m-AAA protease carries out protein quality control in the inner membrane of the mitochondria by mediating degradation of mistranslated or misfolded polypeptides. It also mediates protein maturation of the mitochondrial ribosomal subunit mrpl32/bL32m by catalyzing the cleavage of the presequence of mrpl32/bL32m prior to assembly into the mitochondrial ribosome. Also acts as a membrane protein dislocase: required to dislocate moderately hydrophobic transmembrane segments from the membrane. This is Mitochondrial inner membrane m-AAA protease component yta12 (yta12) from Schizosaccharomyces pombe (strain 972 / ATCC 24843) (Fission yeast).